A 428-amino-acid polypeptide reads, in one-letter code: 26S proteasome regulatory subunit 6B homolog (428 aa).

Methionine 1 carries the post-translational modification N-acetylmethionine. 213 to 220 (GPPGTGKT) provides a ligand contact to ATP. A Glycyl lysine isopeptide (Lys-Gly) (interchain with G-Cter in ubiquitin) cross-link involves residue lysine 280.

This sequence belongs to the AAA ATPase family. In terms of processing, N-acetylated by NAT3.

The protein localises to the cytoplasm. It localises to the nucleus. The 26S proteasome is involved in the ATP-dependent degradation of ubiquitinated proteins. The regulatory (or ATPase) complex confers ATP dependency and substrate specificity to the 26S complex. The chain is 26S proteasome regulatory subunit 6B homolog (RPT3) from Saccharomyces cerevisiae (strain ATCC 204508 / S288c) (Baker's yeast).